Reading from the N-terminus, the 381-residue chain is Queuine tRNA-ribosyltransferase (381 aa).

Aspartate 103 acts as the Proton acceptor in catalysis. Substrate-binding positions include 103 to 107, aspartate 157, glutamine 200, and glycine 227; that span reads DSGGF. The RNA binding stretch occupies residues 258-264; sequence GVGTYRE. Residue aspartate 277 is the Nucleophile of the active site. An RNA binding; important for wobble base 34 recognition region spans residues 282 to 286; that stretch reads TRLAR. Zn(2+) contacts are provided by cysteine 315, cysteine 317, cysteine 320, and histidine 346.

It belongs to the queuine tRNA-ribosyltransferase family. Homodimer. Within each dimer, one monomer is responsible for RNA recognition and catalysis, while the other monomer binds to the replacement base PreQ1. Zn(2+) is required as a cofactor.

It catalyses the reaction 7-aminomethyl-7-carbaguanine + guanosine(34) in tRNA = 7-aminomethyl-7-carbaguanosine(34) in tRNA + guanine. It functions in the pathway tRNA modification; tRNA-queuosine biosynthesis. Its function is as follows. Catalyzes the base-exchange of a guanine (G) residue with the queuine precursor 7-aminomethyl-7-deazaguanine (PreQ1) at position 34 (anticodon wobble position) in tRNAs with GU(N) anticodons (tRNA-Asp, -Asn, -His and -Tyr). Catalysis occurs through a double-displacement mechanism. The nucleophile active site attacks the C1' of nucleotide 34 to detach the guanine base from the RNA, forming a covalent enzyme-RNA intermediate. The proton acceptor active site deprotonates the incoming PreQ1, allowing a nucleophilic attack on the C1' of the ribose to form the product. After dissociation, two additional enzymatic reactions on the tRNA convert PreQ1 to queuine (Q), resulting in the hypermodified nucleoside queuosine (7-(((4,5-cis-dihydroxy-2-cyclopenten-1-yl)amino)methyl)-7-deazaguanosine). This is Queuine tRNA-ribosyltransferase from Cyanothece sp. (strain PCC 7425 / ATCC 29141).